A 447-amino-acid polypeptide reads, in one-letter code: MTAHEVNFDGLVGLTHHYAGLSFGNEASTRHRFQVSNPRLAVKQGLLKMKALADAGFLQAVIPPHERPFIPALRQLGFTGSDEQILDKVARQAPRWLSSVSSASPMWVANAATVCPSADALDGKVHLTVANLNNKFHRALEAPVTEALLRAIFRDENQFSVHSALPQVALLGDEGAANHNRLGGEYGSAGVQLFVYGREEENEIRPARYPARQSREASEAVARLNQVNPQQVIFAQQNPEVIDQGVFHNDVIAVSNRQVLFCHEAAFARQKVLINQLRTRVDGFMAIEVPAEEVSVSDAVATYLFNSQLLSRDDGSMLLVLPRECQDHAGVWRYLNKLVAEDNPISAIQVFDLRESMANGGGPACLRLRVVLTEEERRAVNPAVMMNDALFTALNAWADRYYRDRLTAADLADPLLLREGREALDVLTRLLDLGSVYPFQQTGAADG.

Substrate is bound by residues 19–28 (AGLSFGNEAS), Asn-110, and 137–138 (HR). Glu-174 is an active-site residue. Substrate is bound at residue Arg-212. The active site involves His-248. Substrate is bound by residues Asp-250 and Asn-359. Cys-365 acts as the Nucleophile in catalysis.

It belongs to the succinylarginine dihydrolase family. As to quaternary structure, homodimer.

The enzyme catalyses N(2)-succinyl-L-arginine + 2 H2O + 2 H(+) = N(2)-succinyl-L-ornithine + 2 NH4(+) + CO2. The protein operates within amino-acid degradation; L-arginine degradation via AST pathway; L-glutamate and succinate from L-arginine: step 2/5. In terms of biological role, catalyzes the hydrolysis of N(2)-succinylarginine into N(2)-succinylornithine, ammonia and CO(2). In Salmonella enteritidis PT4 (strain P125109), this protein is N-succinylarginine dihydrolase.